The following is a 110-amino-acid chain: Large ribosomal subunit protein uL22 (110 aa).

This sequence belongs to the universal ribosomal protein uL22 family. In terms of assembly, part of the 50S ribosomal subunit.

Functionally, this protein binds specifically to 23S rRNA; its binding is stimulated by other ribosomal proteins, e.g. L4, L17, and L20. It is important during the early stages of 50S assembly. It makes multiple contacts with different domains of the 23S rRNA in the assembled 50S subunit and ribosome. Its function is as follows. The globular domain of the protein is located near the polypeptide exit tunnel on the outside of the subunit, while an extended beta-hairpin is found that lines the wall of the exit tunnel in the center of the 70S ribosome. The protein is Large ribosomal subunit protein uL22 of Shewanella halifaxensis (strain HAW-EB4).